The following is a 281-amino-acid chain: Probable endonuclease 4 (281 aa).

H69, H109, E145, D179, H182, H216, D229, H231, and E261 together coordinate Zn(2+).

It belongs to the AP endonuclease 2 family. The cofactor is Zn(2+).

It catalyses the reaction Endonucleolytic cleavage to 5'-phosphooligonucleotide end-products.. Its function is as follows. Endonuclease IV plays a role in DNA repair. It cleaves phosphodiester bonds at apurinic or apyrimidinic (AP) sites, generating a 3'-hydroxyl group and a 5'-terminal sugar phosphate. The chain is Probable endonuclease 4 from Chlorobaculum parvum (strain DSM 263 / NCIMB 8327) (Chlorobium vibrioforme subsp. thiosulfatophilum).